Consider the following 519-residue polypeptide: Light-independent protochlorophyllide reductase subunit B (519 aa).

Residue Asp36 participates in [4Fe-4S] cluster binding. Asp274 serves as the catalytic Proton donor. 409 to 410 (GL) lines the substrate pocket. The tract at residues 426-465 (DEAGPSHHGGHSPKPSEAARTPDKVEERADPAPEAPQTGS) is disordered. Positions 445–456 (RTPDKVEERADP) are enriched in basic and acidic residues.

Belongs to the ChlB/BchB/BchZ family. As to quaternary structure, protochlorophyllide reductase is composed of three subunits; BchL, BchN and BchB. Forms a heterotetramer of two BchB and two BchN subunits. The cofactor is [4Fe-4S] cluster.

The catalysed reaction is chlorophyllide a + oxidized 2[4Fe-4S]-[ferredoxin] + 2 ADP + 2 phosphate = protochlorophyllide a + reduced 2[4Fe-4S]-[ferredoxin] + 2 ATP + 2 H2O. It participates in porphyrin-containing compound metabolism; bacteriochlorophyll biosynthesis (light-independent). Its function is as follows. Component of the dark-operative protochlorophyllide reductase (DPOR) that uses Mg-ATP and reduced ferredoxin to reduce ring D of protochlorophyllide (Pchlide) to form chlorophyllide a (Chlide). This reaction is light-independent. The NB-protein (BchN-BchB) is the catalytic component of the complex. The chain is Light-independent protochlorophyllide reductase subunit B from Jannaschia sp. (strain CCS1).